The following is a 162-amino-acid chain: UPF0260 protein Atu0932 (162 aa).

This sequence belongs to the UPF0260 family.

The sequence is that of UPF0260 protein Atu0932 from Agrobacterium fabrum (strain C58 / ATCC 33970) (Agrobacterium tumefaciens (strain C58)).